The primary structure comprises 342 residues: Guanine nucleotide-binding protein alpha-9 subunit (342 aa).

Gly-2 carries N-myristoyl glycine lipidation. Cys-3 is lipidated: S-palmitoyl cysteine. Residues 28 to 342 (REIKLLLLGS…IIQSILKLHY (315 aa)) form the G-alpha domain. The tract at residues 31 to 44 (KLLLLGSGDSGKST) is G1 motif. GTP-binding positions include 36–43 (GSGDSGKS), 167–173 (LRCRQRT), 192–196 (DVGGQ), 261–264 (NKND), and Ala-316. Residues Ser-43 and Thr-173 each coordinate Mg(2+). The tract at residues 165–173 (DVLRCRQRT) is G2 motif. The G3 motif stretch occupies residues 188-197 (FRLIDVGGQK). The G4 motif stretch occupies residues 257 to 264 (VLFLNKND). Residues 314 to 319 (TTATDT) are G5 motif.

The protein belongs to the G-alpha family. In terms of assembly, g proteins are composed of 3 units; alpha, beta and gamma. The alpha chain contains the guanine nucleotide binding site.

Functionally, guanine nucleotide-binding proteins (G proteins) are involved as modulators or transducers in various transmembrane signaling systems. G alpha-9 antagonizes broad chemotactic response. It functions rapidly following receptor stimulation to negatively regulate PI3K/PTEN, adenylyl cyclase, and guanylyl cyclase pathways. The protein is Guanine nucleotide-binding protein alpha-9 subunit (gpaI) of Dictyostelium discoideum (Social amoeba).